The following is a 439-amino-acid chain: Acyl-lipid (8-3)-desaturase (439 aa).

One can recognise a Cytochrome b5 heme-binding domain in the interval glycine 7 to glutamate 88. Positions 40 and 66 each coordinate heme. The chain crosses the membrane as a helical span at residues isoleucine 123 to leucine 143. Positions histidine 171–histidine 175 match the Histidine box-1 motif. Residues histidine 208–alanine 213 carry the Histidine box-2 motif. Helical transmembrane passes span alanine 254 to histidine 274, phenylalanine 287 to serine 307, and valine 312 to valine 332. Residues glutamine 376–histidine 380 carry the Histidine box-3 motif.

It belongs to the fatty acid desaturase type 1 family. Fe(2+) is required as a cofactor.

The protein localises to the membrane. It catalyses the reaction an (8Z,11Z,14Z)-icosatrienoyl-containing glycerolipid + 2 Fe(II)-[cytochrome b5] + O2 + 2 H(+) = (5Z,8Z,11Z,14Z)-eicosatetraenoyl-containing glycerolipid + 2 Fe(III)-[cytochrome b5] + 2 H2O. It carries out the reaction an (8Z,11Z,14Z,17Z)-eicosatetraenoyl-containing glycerolipid + 2 Fe(II)-[cytochrome b5] + O2 + 2 H(+) = a (5Z,8Z,11Z,14Z,17Z)-eicosapentaenoyl-containing glycerolipid + 2 Fe(III)-[cytochrome b5] + 2 H2O. In terms of biological role, fatty acid desaturase that introduces a cis double bond at the 5-position in 20-carbon polyunsaturated fatty acids incorporated in a glycerolipid that contain a Delta(8) double bond. The polypeptide is Acyl-lipid (8-3)-desaturase (Thraustochytrium sp).